Here is a 317-residue protein sequence, read N- to C-terminus: MCTGVRFSDDEGNTYFGRNLDWSFSYGETILVTPRGYHYDTVFGAGGKAKPNAVIGVGVVMADRPMYFDCANEHGLAIAGLNFPGYASFVHEPVEGTENVATFEFPLWVARNFDSVDEVEEALRNVTLVSQIVPGQQESLLHWFIGDGKRSIVVEQMADGMHVHHDDVDVLTNQPTFDFHMENLRNYMCVSNEMAEPTSWGKASLTAWGAGVGMHGIPGDVSSPSRFVRVAYTNAHYPQQNDEAANVSRLFHTLGSVQMVDGMAKMGDGQFERTLFTSGYSSKTNTYYMNTYDDPAIRSYAMADYDMDSSELISVAR.

Cys-2 functions as the Nucleophile; acyl-thioester intermediate in the catalytic mechanism. The deoxycholate site is built by Cys-2 and Arg-18. Asn-82 lines the taurine pocket.

It belongs to the peptidase C59 family. Homotetramer. The tetramer consists of a dimer of dimers.

The catalysed reaction is glycocholate + H2O = cholate + glycine. It catalyses the reaction glycodeoxycholate + H2O = deoxycholate + glycine. The enzyme catalyses chenodeoxycholate + glycine = glycochenodeoxycholate + H2O. It carries out the reaction cholate + taurine = taurocholate + H2O. The catalysed reaction is taurodeoxycholate + H2O = deoxycholate + taurine. It catalyses the reaction taurochenodeoxycholate + H2O = chenodeoxycholate + taurine. The enzyme catalyses an L-alpha-amino acid + cholate = an N-choloyl-L-alpha-amino acid + H2O. It carries out the reaction an L-alpha-amino acid + taurocholate = an N-choloyl-L-alpha-amino acid + taurine. The catalysed reaction is cholate + L-alanine = L-alanocholate + H2O. It catalyses the reaction taurocholate + L-alanine = L-alanocholate + taurine. The enzyme catalyses cholate + L-serine = L-serocholate + H2O. It carries out the reaction taurocholate + L-serine = L-serocholate + taurine. The catalysed reaction is cholate + L-histidine = L-histidocholate + H2O. It catalyses the reaction taurocholate + L-histidine = L-histidocholate + taurine. The protein operates within lipid metabolism; bile acid biosynthesis. Functionally, possesses dual functions in bile acid metabolism. Acts as a bile salt hydrolase that catalyzes the deconjugation of glycine- and taurine-linked bile salts, which occurs naturally in the intestines of humans, releasing amino acid residues and deconjugated bile salts (bile acids). Can hydrolyze the amide bond in all six major human conjugated bile salts, namely glycocholate (GCA), glycodeoxycholate (GDCA), glycochenodeoxycholate (GCDCA), taurocholate (TCA), taurodeoxycholate (TDCA) and taurochenodeoxycholate (TCDCA). Shows a slight preference for glycine-conjugated bile acids as substrates. Also acts as an amine N-acyltransferase that conjugates a wide variety of amino acids to conjugated and non-conjugated bile acids, thus producing bacterial bile acid amidates (BBAAs) - also named microbially conjugated bile acids (MCBAs) - in the gastrointestinal tract. These BBAAs may facilitate communication between the microbiota and host through the activation of human ligand-activated transcription factors. In Bifidobacterium longum subsp. longum (strain ATCC 15707 / DSM 20219 / JCM 1217 / NCTC 11818 / E194b), this protein is Bile salt hydrolase/transferase.